Here is a 246-residue protein sequence, read N- to C-terminus: tRNA (guanine-N(1)-)-methyltransferase (246 aa).

S-adenosyl-L-methionine contacts are provided by residues Gly-114 and 134 to 139 (IGDYIL).

The protein belongs to the RNA methyltransferase TrmD family. In terms of assembly, homodimer.

The protein localises to the cytoplasm. It carries out the reaction guanosine(37) in tRNA + S-adenosyl-L-methionine = N(1)-methylguanosine(37) in tRNA + S-adenosyl-L-homocysteine + H(+). In terms of biological role, specifically methylates guanosine-37 in various tRNAs. This Coxiella burnetii (strain CbuK_Q154) (Coxiella burnetii (strain Q154)) protein is tRNA (guanine-N(1)-)-methyltransferase.